Consider the following 342-residue polypeptide: Ribosomal RNA small subunit methyltransferase H (342 aa).

Residues 36–38 (GGH), Asp-56, Phe-82, Asp-100, and Gln-107 each bind S-adenosyl-L-methionine. The disordered stretch occupies residues 309–342 (ENRESGMGKGHGAAASRFPTPDSRFPTSPNGDAP). Positions 333–342 (FPTSPNGDAP) are enriched in polar residues.

This sequence belongs to the methyltransferase superfamily. RsmH family.

It localises to the cytoplasm. It catalyses the reaction cytidine(1402) in 16S rRNA + S-adenosyl-L-methionine = N(4)-methylcytidine(1402) in 16S rRNA + S-adenosyl-L-homocysteine + H(+). Functionally, specifically methylates the N4 position of cytidine in position 1402 (C1402) of 16S rRNA. This is Ribosomal RNA small subunit methyltransferase H from Xanthomonas campestris pv. campestris (strain 8004).